The sequence spans 310 residues: Thioredoxin reductase (310 aa).

34–41 (NGIQPGGQ) contacts FAD. A disulfide bond links cysteine 135 and cysteine 138. 281–290 (DVQDKIYRQA) is an FAD binding site.

It belongs to the class-II pyridine nucleotide-disulfide oxidoreductase family. As to quaternary structure, homodimer. The cofactor is FAD.

It is found in the cytoplasm. It carries out the reaction [thioredoxin]-dithiol + NADP(+) = [thioredoxin]-disulfide + NADPH + H(+). The chain is Thioredoxin reductase (trxB) from Rickettsia bellii (strain RML369-C).